Consider the following 447-residue polypeptide: GTPase Der (447 aa).

EngA-type G domains are found at residues 4-165 (KIIT…SVEE) and 180-357 (LQIV…KIWN). GTP is bound by residues 10–17 (GRPNVGKS), 57–61 (DTPGL), 119–122 (NKCE), 186–193 (GRPNAGKS), 233–237 (DTAGL), and 298–301 (NKWD). Residues 358-443 (KKITTNKLNK…PIRFTYVKNK (86 aa)) enclose the KH-like domain.

The protein belongs to the TRAFAC class TrmE-Era-EngA-EngB-Septin-like GTPase superfamily. EngA (Der) GTPase family. Associates with the 50S ribosomal subunit.

GTPase that plays an essential role in the late steps of ribosome biogenesis. In Rickettsia prowazekii (strain Madrid E), this protein is GTPase Der.